The chain runs to 313 residues: Biotin synthase (313 aa).

The Radical SAM core domain maps to 37 to 263 (YYGKKVKLNM…INPTKEIRIA (227 aa)). [4Fe-4S] cluster-binding residues include Cys-55, Cys-59, and Cys-62. 4 residues coordinate [2Fe-2S] cluster: Cys-98, Cys-131, Cys-191, and Arg-261.

The protein belongs to the radical SAM superfamily. Biotin synthase family. As to quaternary structure, homodimer. Requires [4Fe-4S] cluster as cofactor. [2Fe-2S] cluster serves as cofactor.

It carries out the reaction (4R,5S)-dethiobiotin + (sulfur carrier)-SH + 2 reduced [2Fe-2S]-[ferredoxin] + 2 S-adenosyl-L-methionine = (sulfur carrier)-H + biotin + 2 5'-deoxyadenosine + 2 L-methionine + 2 oxidized [2Fe-2S]-[ferredoxin]. It participates in cofactor biosynthesis; biotin biosynthesis; biotin from 7,8-diaminononanoate: step 2/2. Its function is as follows. Catalyzes the conversion of dethiobiotin (DTB) to biotin by the insertion of a sulfur atom into dethiobiotin via a radical-based mechanism. This is Biotin synthase from Staphylococcus epidermidis (strain ATCC 12228 / FDA PCI 1200).